The following is a 209-amino-acid chain: MDFYYLPGSAPCRAVQMTAAAVGVELNLKLTDLMKGEHMKPEFLKLNPQHCIPTLVDNGFALWESRAIQIYLAEKYGKDDKLYPKDPQKRAVVNQRLYFDMGTLYQRFADYHYPQIFAKQPANPENEKKMKDAVGFLNTFLEGQEYAAGNDLTIADLSLAATIATYEVAGFDFAPYPNVAAWFARCKANAPGYALNQAGADEFKAKFLS.

A GST N-terminal domain is found at 1–80 (MDFYYLPGSA…YLAEKYGKDD (80 aa)). Glutathione contacts are provided by residues Ser9, 50–52 (HCI), and 64–66 (ESR). The GST C-terminal domain occupies 86 to 207 (DPQKRAVVNQ…AGADEFKAKF (122 aa)).

The protein belongs to the GST superfamily. Theta family. Homodimer.

The catalysed reaction is RX + glutathione = an S-substituted glutathione + a halide anion + H(+). The enzyme catalyses 1,1,1-trichloro-2,2-bis(4-chlorophenyl)ethane = 1,1-dichloro-2,2-bis(4-chlorophenyl)ethylene + chloride + H(+). Inhibited by S-hexylglutathione. In terms of biological role, conjugation of reduced glutathione to a wide number of exogenous and endogenous hydrophobic electrophiles. Has DDT dehydrochlorinase activity. This Anopheles gambiae (African malaria mosquito) protein is Glutathione S-transferase 1, isoform D (GstD1).